The chain runs to 306 residues: ADP,ATP carrier protein ER-ANT1 (306 aa).

Solcar repeat units follow at residues 8–101 (ERFS…FKNL), 113–205 (KWFA…IKPI), and 213–299 (GNFL…LHQI). 5 consecutive transmembrane segments (helical) span residues 10 to 37 (FSAD…VKLL), 78 to 102 (QANV…KNLL), 111 to 131 (YLKW…TTSL), 181 to 202 (FGVS…YDTI), and 216 to 236 (LASF…AYPF). ADP-binding residues include Arg83 and Lys95. An ADP-binding site is contributed by Arg240. The segment at 240–245 (RRRMML) is important for transport activity. The Nucleotide carrier signature motif signature appears at 240–245 (RRRMML). The helical transmembrane segment at 276 to 296 (VTANMLLGVAGAGVLAGYDQL) threads the bilayer.

Belongs to the mitochondrial carrier (TC 2.A.29) family.

The protein localises to the endoplasmic reticulum membrane. It catalyses the reaction ADP(in) + ATP(out) = ADP(out) + ATP(in). In terms of biological role, ADP:ATP antiporter that catalyzes the exchange of ADP and ATP across the endoplasmic reticulum membrane. The protein is ADP,ATP carrier protein ER-ANT1 (ER-ANT1) of Arabidopsis thaliana (Mouse-ear cress).